The primary structure comprises 88 residues: Cell division topological specificity factor (88 aa).

The protein belongs to the MinE family.

Prevents the cell division inhibition by proteins MinC and MinD at internal division sites while permitting inhibition at polar sites. This ensures cell division at the proper site by restricting the formation of a division septum at the midpoint of the long axis of the cell. The protein is Cell division topological specificity factor of Psychromonas ingrahamii (strain DSM 17664 / CCUG 51855 / 37).